A 162-amino-acid polypeptide reads, in one-letter code: Anaerobic nitrite reductase (162 aa).

Residue Ser-2 is modified to N-acetylserine. The Globin domain occupies 9–158 (VFTEEQEALV…LVAAIKFEMK (150 aa)). Residues 42 to 46 (EIAPS) carry the Homodimerization motif. Positions 52, 66, 70, 100, and 105 each coordinate heme b. The Homodimerization signature appears at 112 to 124 (NEHFEVTRFALLE).

Belongs to the plant globin family. Homodimer with distinct heme coordination in each subunits. Requires heme b as cofactor. In terms of tissue distribution, root nodules.

It localises to the cytoplasm. Its subcellular location is the nucleus. It carries out the reaction Fe(III)-heme b-[protein] + nitric oxide + H2O = Fe(II)-heme b-[protein] + nitrite + 2 H(+). Functionally, phytoglobin that reduces nitrite to nitric oxide (NO) under anoxic conditions (e.g. during flooding or in waterlogged soil) and upon root nodulation. Required for general plant development and during nodulation, especially for the onset of symbiosis. Monitors nitric oxide (NO) levels during early phase of the nitrogen-fixing symbiosis and buffers oxygen in functioning nodules. May not function as an oxygen storage or transport protein. Has an unusually high affinity for O(2) through a hexacoordinate heme iron because of a very low dissociation constant. The protein is Anaerobic nitrite reductase of Parasponia andersonii (Sponia andersonii).